We begin with the raw amino-acid sequence, 89 residues long: Dolichol-phosphate mannose synthase subunit 3 (89 aa).

The next 2 helical transmembrane spans lie at 7–27 (ILSLLVAISAFWIGLLQAAII) and 33–53 (WLLPIYFVVSLGCYGLLMVGV).

This sequence belongs to the DPM3 family. Component of the dolichol-phosphate mannose (DPM) synthase complex composed of DPMS1, DPMS2 and DPMS3; in the complex interacts directly with DPMS1 and DPMS2.

Its subcellular location is the endoplasmic reticulum membrane. It functions in the pathway protein modification; protein glycosylation. Regulates the biosynthesis of dolichol phosphate-mannose. Regulatory subunit of the dolichol-phosphate mannose (DPM) synthase complex; essential for the ER localization and stable expression of DPMS1. The chain is Dolichol-phosphate mannose synthase subunit 3 from Arabidopsis thaliana (Mouse-ear cress).